The following is a 427-amino-acid chain: Probable G-protein coupled receptor 150 (427 aa).

Topologically, residues 1-3 (MED) are extracellular. Residues 4 to 24 (PFSLAILNPASNLSVPTQPSW) traverse the membrane as a helical segment. The Cytoplasmic portion of the chain corresponds to 25 to 50 (SLNLTSEQGASVPGPHSPPRGPPSHR). Residues 51–71 (IHLVFLGIILVAAVAGNTTVL) traverse the membrane as a helical segment. The Extracellular segment spans residues 72 to 89 (CRLCGGSSGPWPGPKRRK). A helical transmembrane segment spans residues 90–110 (MDFLLVQLAAADLYASGGTAL). Residues 111–170 (SQLAWELLGDPRPALGDLACRLSHLLQASGRGASAHLVALIALERQLAVRIPQGPQLPAR) are Cytoplasmic-facing. Residues 171 to 191 (ALAALSWLLALLLALPPTFVV) traverse the membrane as a helical segment. At 192–230 (RWDAPPSSTANAWPGKHCCRGIFAPLPRWHLQVYALYEA) the chain is on the extracellular side. The helical transmembrane segment at 231 to 251 (IVGFAAPVALLGFSCGHLLCV) threads the bilayer. Over 252 to 286 (WWQRGSQAPVARMPWSPSMARASLPSALPQAKVQS) the chain is Cytoplasmic. The chain crosses the membrane as a helical span at residues 287–307 (LKMSLALALLFVGCDLPYFAA). At 308–327 (RLAAAWSSKPAGDWERESLV) the chain is on the extracellular side. A helical transmembrane segment spans residues 328 to 348 (AAMRVLEVANSAINPLIYLFF). Over 349–427 (QAGDCRLWRR…PPPCSCESAF (79 aa)) the chain is Cytoplasmic. Positions 402 to 427 (EERNQGCLRPPPPRPRPPPCSCESAF) are disordered. Residues 410-421 (RPPPPRPRPPPC) show a composition bias toward pro residues.

This sequence belongs to the G-protein coupled receptor 1 family.

It is found in the cell membrane. Its function is as follows. Orphan receptor. The polypeptide is Probable G-protein coupled receptor 150 (Gpr150) (Mus musculus (Mouse)).